The primary structure comprises 145 residues: Actin-related protein 4A (145 aa).

The disordered stretch occupies residues 47–66; it reads IDDAANTTEDAKESDKEKGK. Over residues 55–64 the composition is skewed to basic and acidic residues; the sequence is EDAKESDKEK.

It belongs to the actin family. ARP4 subfamily. As to expression, expressed in roots, leaves and flowers.

This Arabidopsis thaliana (Mouse-ear cress) protein is Actin-related protein 4A (ARP4A).